The sequence spans 545 residues: CTP synthase (545 aa).

The segment at 1–266 (MTHFIFVTGG…DDLICERFGF (266 aa)) is amidoligase domain. Ser13 provides a ligand contact to CTP. Ser13 lines the UTP pocket. ATP is bound by residues 14-19 (SLGKGI) and Asp71. Residues Asp71 and Glu140 each contribute to the Mg(2+) site. CTP-binding positions include 147–149 (DIE), 187–192 (KTKPTQ), and Lys223. UTP-binding positions include 187-192 (KTKPTQ) and Lys223. 239 to 241 (KDA) contacts ATP. A Glutamine amidotransferase type-1 domain is found at 292-543 (RVAMVGKYVE…IDAAKTQHQK (252 aa)). Position 353 (Gly353) interacts with L-glutamine. Catalysis depends on Cys380, which acts as the Nucleophile; for glutamine hydrolysis. Residues 381–384 (LGMQ), Glu404, and Arg471 each bind L-glutamine. Catalysis depends on residues His516 and Glu518.

Belongs to the CTP synthase family. In terms of assembly, homotetramer.

The catalysed reaction is UTP + L-glutamine + ATP + H2O = CTP + L-glutamate + ADP + phosphate + 2 H(+). It catalyses the reaction L-glutamine + H2O = L-glutamate + NH4(+). It carries out the reaction UTP + NH4(+) + ATP = CTP + ADP + phosphate + 2 H(+). It functions in the pathway pyrimidine metabolism; CTP biosynthesis via de novo pathway; CTP from UDP: step 2/2. With respect to regulation, allosterically activated by GTP, when glutamine is the substrate; GTP has no effect on the reaction when ammonia is the substrate. The allosteric effector GTP functions by stabilizing the protein conformation that binds the tetrahedral intermediate(s) formed during glutamine hydrolysis. Inhibited by the product CTP, via allosteric rather than competitive inhibition. Its function is as follows. Catalyzes the ATP-dependent amination of UTP to CTP with either L-glutamine or ammonia as the source of nitrogen. Regulates intracellular CTP levels through interactions with the four ribonucleotide triphosphates. The protein is CTP synthase of Acinetobacter baumannii (strain ACICU).